The chain runs to 781 residues: MATWMEGKYVARGQFTGECIAVLTSGGDAQGMNAAVRAVVRMGIYCGCRVFFIREGYQGLVDGGQNIQEASWADVSGILQLGGTKIGSARCMDFRERYGRLKAAENLVKNQITNLVVIGGDGSLTGANLFRAEWSSLLEELVTSNKISAESAKQFHRLNIVGLVGSIDNDFCGTDMTIGADSALHRIIEATDAISTTAHSHQRCFILEVMGRHCGYLALVASMACEADWVFIPEMPPTDDWREKLCHKLRMNREHGQRVNIIMVAEGAIDRACKPITCEIVKNLIVSELQLDTRITVLGHVQRGGSPSAFDRILGSRMGAEAVLALMDADRDPNLPSCVISLDGNQAVRVPLVKCVDRTRQVAEAMKACDFDHAVELRGTSFMNNLATYIKLSKIEQPRQSVMSSENNLRIGIVNVGAPACGINAVIRGFTRLGITKGYKVIGIHEGFSGLVKGDASEIQWADVRGWVGMGGSMLGTRRDTPNGLGIDKVAAKFKELKLSGLLIIGGFEAYECMIELVEGREKYPELCIPMAMVPATISNNVPGTDFSLGCDTALNEITSVLDKIKQSALGTKRRVFVVETMGGYCGYLATMSALAGGADAAYIFEEPFTIDDLREDVVHLRAKIDDNVKRGLVLRADMLINTITSEFIHQLYAQEGQGIFDCRCNVLGHMQQGDRPSPFDRSLGTKFASKAIDWLDEQINANIVQILQSIHQTFMLYINWYCTSSDNLFKYSLELREHTDFVHRLPKEEWWLSLRPLMRIMAKHDSLYESESIMAGTDRK.

The N-terminal catalytic PFK domain 1 stretch occupies residues 1–394 (MATWMEGKYV…NLATYIKLSK (394 aa)). ATP-binding positions include G27, 90-91 (RC), and 120-123 (GDGS). D121 provides a ligand contact to Mg(2+). Substrate-binding positions include 166 to 168 (SID), R203, 210 to 212 (MGR), E266, R294, and 300 to 303 (HVQR). D168 functions as the Proton acceptor in the catalytic mechanism. An interdomain linker region spans residues 395 to 409 (IEQPRQSVMSSENNL). Positions 410–781 (RIGIVNVGAP…ESIMAGTDRK (372 aa)) are C-terminal regulatory PFK domain 2. Beta-D-fructose 2,6-bisphosphate-binding positions include R479, 537–541 (TISNN), R575, 582–584 (MGG), D638, R664, 670–673 (HMQQ), and R745.

The protein belongs to the phosphofructokinase type A (PFKA) family. ATP-dependent PFK group I subfamily. Eukaryotic two domain clade 'E' sub-subfamily. As to quaternary structure, homotetramer. It depends on Mg(2+) as a cofactor.

It is found in the cytoplasm. It carries out the reaction beta-D-fructose 6-phosphate + ATP = beta-D-fructose 1,6-bisphosphate + ADP + H(+). Its pathway is carbohydrate degradation; glycolysis; D-glyceraldehyde 3-phosphate and glycerone phosphate from D-glucose: step 3/4. Allosterically activated by ADP, AMP, or fructose 2,6-bisphosphate, and allosterically inhibited by ATP or citrate. Catalyzes the phosphorylation of D-fructose 6-phosphate to fructose 1,6-bisphosphate by ATP, the first committing step of glycolysis. The chain is ATP-dependent 6-phosphofructokinase (PFK) from Schistosoma mansoni (Blood fluke).